A 607-amino-acid chain; its full sequence is Elongation factor 4 (607 aa).

The tr-type G domain occupies 11 to 193; sequence ENIRNFSIIA…KIVEVVPPPE (183 aa). GTP is bound by residues 23-28 and 140-143; these read DHGKST and NKID.

This sequence belongs to the TRAFAC class translation factor GTPase superfamily. Classic translation factor GTPase family. LepA subfamily.

The protein localises to the cell membrane. The enzyme catalyses GTP + H2O = GDP + phosphate + H(+). Required for accurate and efficient protein synthesis under certain stress conditions. May act as a fidelity factor of the translation reaction, by catalyzing a one-codon backward translocation of tRNAs on improperly translocated ribosomes. Back-translocation proceeds from a post-translocation (POST) complex to a pre-translocation (PRE) complex, thus giving elongation factor G a second chance to translocate the tRNAs correctly. Binds to ribosomes in a GTP-dependent manner. The polypeptide is Elongation factor 4 (Staphylococcus haemolyticus (strain JCSC1435)).